A 235-amino-acid chain; its full sequence is Casparian strip membrane protein 2 (235 aa).

Residues 1–46 (MSGSDTSGSVHVDEHGHGKASSSYDGAGAPAPAPAPFQGHRKAGSG) form a disordered region. The Cytoplasmic portion of the chain corresponds to 1–67 (MSGSDTSGSV…GSGGDGLRRC (67 aa)). Residues 68–88 (LGLIDFVLRVAAFGPTLAAAI) form a helical membrane-spanning segment. The Extracellular segment spans residues 89–115 (SIGTSDERLSVFTNYFQFRARFDDFPA). A helical transmembrane segment spans residues 116–136 (FEFFIVANAIAAGYMVLSLPF). The Cytoplasmic portion of the chain corresponds to 137-150 (SAATIMSSKATGVK). The helical transmembrane segment at 151 to 171 (LLLLICDTIMVGLLTAAASAA) threads the bilayer. Residues 172-203 (AAMVYVAHEGNLRANWVPICLQFHGFCQRTSG) lie on the Extracellular side of the membrane. A helical transmembrane segment spans residues 204 to 224 (AVIASFLAVFVLMVLIVMAAF). Residues 225–235 (TMPRRTHHTAS) lie on the Cytoplasmic side of the membrane.

The protein belongs to the Casparian strip membrane proteins (CASP) family. Homodimer and heterodimers.

The protein resides in the cell membrane. Regulates membrane-cell wall junctions and localized cell wall deposition. Required for establishment of the Casparian strip membrane domain (CSD) and the subsequent formation of Casparian strips, a cell wall modification of the root endodermis that determines an apoplastic barrier between the intraorganismal apoplasm and the extraorganismal apoplasm and prevents lateral diffusion. The polypeptide is Casparian strip membrane protein 2 (Oryza sativa subsp. indica (Rice)).